The following is a 614-amino-acid chain: Dihydroxy-acid dehydratase (614 aa).

D81 contacts Mg(2+). C122 contacts [2Fe-2S] cluster. Mg(2+) contacts are provided by D123 and K124. K124 carries the post-translational modification N6-carboxylysine. C195 is a [2Fe-2S] cluster binding site. Mg(2+) is bound at residue E491. S517 serves as the catalytic Proton acceptor.

It belongs to the IlvD/Edd family. As to quaternary structure, homodimer. [2Fe-2S] cluster serves as cofactor. The cofactor is Mg(2+).

The catalysed reaction is (2R)-2,3-dihydroxy-3-methylbutanoate = 3-methyl-2-oxobutanoate + H2O. It carries out the reaction (2R,3R)-2,3-dihydroxy-3-methylpentanoate = (S)-3-methyl-2-oxopentanoate + H2O. Its pathway is amino-acid biosynthesis; L-isoleucine biosynthesis; L-isoleucine from 2-oxobutanoate: step 3/4. It participates in amino-acid biosynthesis; L-valine biosynthesis; L-valine from pyruvate: step 3/4. Functions in the biosynthesis of branched-chain amino acids. Catalyzes the dehydration of (2R,3R)-2,3-dihydroxy-3-methylpentanoate (2,3-dihydroxy-3-methylvalerate) into 2-oxo-3-methylpentanoate (2-oxo-3-methylvalerate) and of (2R)-2,3-dihydroxy-3-methylbutanoate (2,3-dihydroxyisovalerate) into 2-oxo-3-methylbutanoate (2-oxoisovalerate), the penultimate precursor to L-isoleucine and L-valine, respectively. This is Dihydroxy-acid dehydratase from Actinobacillus succinogenes (strain ATCC 55618 / DSM 22257 / CCUG 43843 / 130Z).